The sequence spans 218 residues: Cold-regulated protein 28 (218 aa).

Disordered stretches follow at residues 1–51 (MEND…ADSK) and 166–218 (TKHS…KPRT). A compositionally biased stretch (low complexity) spans 20-37 (EASAESQSESTLSNSLDS). Over residues 186-207 (GEVSKKREREANNDDSSLKEDQ) the composition is skewed to basic and acidic residues.

The protein resides in the nucleus. In terms of biological role, together with COR27, involved in central circadian clock regulation and in flowering promotion, by binding to the chromatin of clock-associated evening genes TOC1, PRR5, ELF4 and cold-responsive genes in order to repress their transcription. Negative regulator of freezing tolerance. The polypeptide is Cold-regulated protein 28 (Arabidopsis thaliana (Mouse-ear cress)).